A 441-amino-acid chain; its full sequence is Probable tRNA pseudouridine synthase D (441 aa).

The active-site Nucleophile is Asp-89. Residues 168 to 393 enclose the TRUD domain; it reads GVPNFFGVQR…SKGTRREVLL (226 aa).

Belongs to the pseudouridine synthase TruD family.

The catalysed reaction is uridine(13) in tRNA = pseudouridine(13) in tRNA. Functionally, could be responsible for synthesis of pseudouridine from uracil-13 in transfer RNAs. The sequence is that of Probable tRNA pseudouridine synthase D from Methanosarcina acetivorans (strain ATCC 35395 / DSM 2834 / JCM 12185 / C2A).